A 129-amino-acid polypeptide reads, in one-letter code: UPF0102 protein CT2262 (129 aa).

Belongs to the UPF0102 family.

The protein is UPF0102 protein CT2262 of Chlorobaculum tepidum (strain ATCC 49652 / DSM 12025 / NBRC 103806 / TLS) (Chlorobium tepidum).